The chain runs to 184 residues: ATP synthase subunit b, chloroplastic (184 aa).

The helical transmembrane segment at 29-49 (INLINLILVLGILFYYGKGVL) threads the bilayer.

The protein belongs to the ATPase B chain family. As to quaternary structure, F-type ATPases have 2 components, F(1) - the catalytic core - and F(0) - the membrane proton channel. F(1) has five subunits: alpha(3), beta(3), gamma(1), delta(1), epsilon(1). F(0) has four main subunits: a(1), b(1), b'(1) and c(10-14). The alpha and beta chains form an alternating ring which encloses part of the gamma chain. F(1) is attached to F(0) by a central stalk formed by the gamma and epsilon chains, while a peripheral stalk is formed by the delta, b and b' chains.

The protein resides in the plastid. It localises to the chloroplast thylakoid membrane. Its function is as follows. F(1)F(0) ATP synthase produces ATP from ADP in the presence of a proton or sodium gradient. F-type ATPases consist of two structural domains, F(1) containing the extramembraneous catalytic core and F(0) containing the membrane proton channel, linked together by a central stalk and a peripheral stalk. During catalysis, ATP synthesis in the catalytic domain of F(1) is coupled via a rotary mechanism of the central stalk subunits to proton translocation. Component of the F(0) channel, it forms part of the peripheral stalk, linking F(1) to F(0). This chain is ATP synthase subunit b, chloroplastic, found in Adiantum capillus-veneris (Maidenhair fern).